The primary structure comprises 33 residues: Pardaxin P-4 (33 aa).

The protein belongs to the pardaxin family. In terms of assembly, monomer. In aqueous solution exists as a tetramer.

It is found in the secreted. Its subcellular location is the target cell membrane. Exhibits unusual shark repellent and surfactant properties. Forms voltage-dependent, ion-permeable channels in membranes. At high concentration causes cell membrane lysis. The sequence is that of Pardaxin P-4 from Pardachirus marmoratus (Finless sole).